The chain runs to 187 residues: Nodulin-related protein 1 (187 aa).

Methionine 1 is subject to N-acetylmethionine. Disordered regions lie at residues 1–66 (MDFF…ATNA) and 132–176 (YETS…HGFG). Over residues 7–48 (QVKKKFSDKKPESSDPEPNHNKNKPGHTEPTTHKPGHGEPTT) the composition is skewed to basic and acidic residues. Residues 142 to 158 (GGTGSHGNVGGHGGGAG) are compositionally biased toward gly residues.

As to quaternary structure, interacts with RPS2. In terms of tissue distribution, expressed in roots, leaves, flowers and siliques.

In terms of biological role, prevents accumulation of abscisic acid (ABA) after heat treatment, thus reducing thermotolerance. May be a negative regulator of the ABA signaling/synthesis pathway. Required for defense responses against avirulent bacteria such as P.syringae pv. tomato DC3000 (avrRpt2). The chain is Nodulin-related protein 1 from Arabidopsis thaliana (Mouse-ear cress).